Here is a 344-residue protein sequence, read N- to C-terminus: Tryptophan--tRNA ligase (344 aa).

Residues 20–22 (QPS) and 28–29 (GN) contribute to the ATP site. The short motif at 21–29 (PSGALHLGN) is the 'HIGH' region element. D144 contacts L-tryptophan. ATP-binding positions include 156–158 (GED), V197, and 206–210 (KMSKS). The 'KMSKS' region motif lies at 206 to 210 (KMSKS).

Belongs to the class-I aminoacyl-tRNA synthetase family. As to quaternary structure, homodimer.

It localises to the cytoplasm. It carries out the reaction tRNA(Trp) + L-tryptophan + ATP = L-tryptophyl-tRNA(Trp) + AMP + diphosphate + H(+). Functionally, catalyzes the attachment of tryptophan to tRNA(Trp). This is Tryptophan--tRNA ligase from Caulobacter vibrioides (strain ATCC 19089 / CIP 103742 / CB 15) (Caulobacter crescentus).